The chain runs to 366 residues: Ribosomal RNA large subunit methyltransferase M (366 aa).

Residues S188, 221–224, D240, D260, and D277 contribute to the S-adenosyl-L-methionine site; that span reads CPGG. The active-site Proton acceptor is the K306.

The protein belongs to the class I-like SAM-binding methyltransferase superfamily. RNA methyltransferase RlmE family. RlmM subfamily. In terms of assembly, monomer.

Its subcellular location is the cytoplasm. The enzyme catalyses cytidine(2498) in 23S rRNA + S-adenosyl-L-methionine = 2'-O-methylcytidine(2498) in 23S rRNA + S-adenosyl-L-homocysteine + H(+). In terms of biological role, catalyzes the 2'-O-methylation at nucleotide C2498 in 23S rRNA. This chain is Ribosomal RNA large subunit methyltransferase M, found in Escherichia coli O139:H28 (strain E24377A / ETEC).